Here is a 592-residue protein sequence, read N- to C-terminus: Methylenetetrahydrofolate reductase (NADH) 1 (592 aa).

E21 acts as the Proton donor/acceptor in catalysis. Residues 21-26 (EFFPPK) and 52-53 (TW) contribute to the NAD(+) site. FAD-binding positions include 52–53 (TW), H81, 111–113 (RGD), Y153, 157–160 (HPDV), D175, and K182. D113 lines the substrate pocket. 2 residues coordinate substrate: Q193 and Y285.

Belongs to the methylenetetrahydrofolate reductase family. Homodimer. FAD serves as cofactor.

The enzyme catalyses (6S)-5-methyl-5,6,7,8-tetrahydrofolate + NAD(+) = (6R)-5,10-methylene-5,6,7,8-tetrahydrofolate + NADH + H(+). The protein operates within one-carbon metabolism; tetrahydrofolate interconversion. Its activity is regulated as follows. Plant MTHFRs strongly prefer NADH over NADPH. Not inhibited by methionine or S-adenosylmethionine. In terms of biological role, the probable reversibility of the MTHFR reaction in plants suggests that they can metabolize the methyl group of 5,10-methylenetetrahydrofolate to serine, sugars and starch. This is Methylenetetrahydrofolate reductase (NADH) 1 (MTHFR1) from Arabidopsis thaliana (Mouse-ear cress).